A 715-amino-acid polypeptide reads, in one-letter code: SEC14-like protein 1 (715 aa).

The interval 1-510 (MVQKYQSPVR…VPKSLYRTAE (510 aa)) is required for interaction and inhibitory function toward RIGI. Residues 3-175 (QKYQSPVRVY…YLRQLEEEGI (173 aa)) form the PRELI/MSF1 domain. Position 234 is a phosphothreonine (Thr-234). In terms of domain architecture, CRAL-TRIO spans 319-495 (PPQVLLDYYA…FLSGECMCDV (177 aa)). The 154-residue stretch at 521–674 (TETIYQSASV…KCKVMYYTEV (154 aa)) folds into the GOLD domain. Ser-586 is subject to Phosphoserine.

In terms of assembly, interacts with RIGI (via tandem CARD domain); the interaction is direct. Interacts (via GOLD domain) with SLC18A3; the interaction is direct. Interacts with SLC5A7 (via GOLD domain); the interaction is direct.

The protein resides in the cytoplasm. The protein localises to the golgi apparatus. In terms of biological role, may play a role in innate immunity by inhibiting the antiviral RIG-I signaling pathway. In this pathway, functions as a negative regulator of RIGI, the cytoplasmic sensor of viral nucleic acids. Prevents the interaction of RIGI with MAVS/IPS1, an important step in signal propagation. May also regulate the SLC18A3 and SLC5A7 cholinergic transporters. The sequence is that of SEC14-like protein 1 from Mus musculus (Mouse).